Here is a 601-residue protein sequence, read N- to C-terminus: MEGHIHHITPRNITASILQQKVAVQGIITKSSQIRPLLQTAVQFCPLDYSTHARDLSHADVMVKLSSKTPDGKPLELEPGLSTYKDFQTLVVQEMPESAPTGQMPRSVIVILLDQLVDKGKPGDRVIINGTLKALAGPNHSSTFKVVLEAENINTLQSEGPELTEIDKENIKKVMKEENPINLLSKSIAPSIYGHSDVKKAILLMLVGATPKIRLRSRVRGDIHVMLCGDPSTAKSQLLRYVMSIAPLAVSTNGRGATGVGLTAAVVNDPDTNQRTLEAGAMVLADRGIVCVDEFDKMSIEDRAAMHEVMEQQTVTVQKAGIHTALNARCSILAAANPSNGNYDVKKSPMENLYFPESLLSRFDLIFIILDSSTEELDRRLSQHVLKMHRHFDALTEQRGDDEVNVLALVDAEREKIGDAPVYQDTSLYEGEKLFTNKFIKKYVTYARNLPTPSLSESASETIADAYVKLRENERLKRIKHNFKIKTLPITARALDSLIRLAEAHARIRGSDTIDEIDAQVAVQLIFYAHFDENWEGNITTDIARKVREYLTNELIAECKDVIQFDDILSICGIDKPTLMKILPQLSFGYDEDEEFVYKQN.

Residues 180 to 386 (PINLLSKSIA…LDRRLSQHVL (207 aa)) enclose the MCM domain. 229-236 (GDPSTAKS) serves as a coordination point for ATP. An Arginine finger motif is present at residues 361 to 364 (SRFD).

Belongs to the MCM family. In terms of assembly, component of the MCM2-7 complex.

Its subcellular location is the nucleus. It is found in the chromosome. It localises to the nucleoplasm. The catalysed reaction is ATP + H2O = ADP + phosphate + H(+). In terms of biological role, acts as a component of the MCM2-7 complex (MCM complex) which is the replicative helicase essential for DNA replication initiation and elongation in eukaryotic cells. Required for DNA replication and cell proliferation. The active ATPase sites in the MCM2-7 ring are formed through the interaction surfaces of two neighboring subunits such that a critical structure of a conserved arginine finger motif is provided in trans relative to the ATP-binding site of the Walker A box of the adjacent subunit. This chain is DNA replication licensing factor MCM3, found in Entamoeba histolytica (strain ATCC 30459 / HM-1:IMSS / ABRM).